Here is a 1233-residue protein sequence, read N- to C-terminus: Glutamate receptor ionotropic, NMDA 2C (1233 aa).

An N-terminal signal peptide occupies residues 1–19; sequence MGGALGPALLLTSLFGAWA. The Extracellular portion of the chain corresponds to 20–554; that stretch reads GLGPGQGEQG…SAFLEPYSPA (535 aa). Asn-70 and Asn-73 each carry an N-linked (GlcNAc...) asparagine glycan. A disulfide bridge connects residues Cys-82 and Cys-317. N-linked (GlcNAc...) asparagine glycans are attached at residues Asn-337 and Asn-438. Intrachain disulfides connect Cys-426/Cys-453 and Cys-433/Cys-454. Positions 509, 511, and 516 each coordinate L-glutamate. N-linked (GlcNAc...) asparagine glycosylation occurs at Asn-539. A helical transmembrane segment spans residues 555–575; it reads VWVMMFVMCLTVVAITVFMFE. Topologically, residues 576-598 are cytoplasmic; that stretch reads YFSPVSYNQNLTRGKKSGGPAFT. The discontinuously helical intramembrane region spans 599-611; it reads IGKSVWLLWALVF. The segment at 601–620 is pore-forming; sequence KSVWLLWALVFNNSVPIENP. Over 612–626 the chain is Cytoplasmic; that stretch reads NNSVPIENPRGTTSK. Residues 627–644 form a helical membrane-spanning segment; it reads IMVLVWAFFAVIFLASYT. Topologically, residues 645 to 813 are extracellular; sequence ANLAAFMIQE…EVMSSKLDID (169 aa). N-linked (GlcNAc...) asparagine glycosylation occurs at Asn-685. Ser-687, Thr-688, and Asp-729 together coordinate L-glutamate. Cys-743 and Cys-798 are oxidised to a cystine. The chain crosses the membrane as a helical span at residues 814-836; that stretch reads NMAGVFYMLLVAMGLALLVFAWE. The Cytoplasmic segment spans residues 837–1233; the sequence is HLVYWKLRHS…RRISSLESEV (397 aa). A phosphoserine mark is found at Ser-875, Ser-881, and Ser-912. Residues 920–994 form a disordered region; it reads IENWGGGRRA…GPPLSDVSRV (75 aa). Pro residues-rich tracts occupy residues 929–956 and 975–987; these read APPP…PEPS and PQPP…PGPP. Residues 1231–1233 carry the PDZ-binding motif; sequence SEV.

This sequence belongs to the glutamate-gated ion channel (TC 1.A.10.1) family. NR2C/GRIN2C subfamily. Heterotetramer. Forms heterotetrameric channels composed of two GluN1/zeta subunits (GRIN1), and two identical GluN2/epsilon subunits (GRIN2A, GRIN2B, GRIN2C or GRIN2D) or GluN3 subunits (GRIN3A or GRIN3B) (in vitro). In vivo, the subunit composition may depend on the expression levels of the different subunits. Interacts with PDZ domains of PATJ and DLG4. Interacts (via PDZ-binding motif) with SNX27 (via PDZ domain); the interaction is required for recycling to the plasma membrane when endocytosed and prevent degradation in lysosomes. As to expression, mainly expressed in brain with predominant expression is in the cerebellum, also present in the hippocampus, amygdala, caudate nucleus, corpus callosum, subthalamic nuclei and thalamus. Detected in the heart, skeletal muscle and pancreas.

The protein localises to the cell membrane. It is found in the postsynaptic cell membrane. The catalysed reaction is Ca(2+)(in) = Ca(2+)(out). It carries out the reaction Na(+)(in) = Na(+)(out). It catalyses the reaction K(+)(in) = K(+)(out). Functionally, component of N-methyl-D-aspartate (NMDA) receptors (NMDARs) that function as heterotetrameric, ligand-gated cation channels with high calcium permeability and voltage-dependent block by Mg(2+). Participates in synaptic plasticity for learning and memory formation by contributing to the slow phase of excitatory postsynaptic current and long-term synaptic potentiation. Channel activation requires binding of the neurotransmitter L-glutamate to the GluN2 subunit, glycine or D-serine binding to the GluN1 subunit, plus membrane depolarization to eliminate channel inhibition by Mg(2+). NMDARs mediate simultaneously the potasium efflux and the influx of calcium and sodium. Each GluN2 subunit confers differential attributes to channel properties, including activation, deactivation and desensitization kinetics, pH sensitivity, Ca2(+) permeability, and binding to allosteric modulators. The protein is Glutamate receptor ionotropic, NMDA 2C of Homo sapiens (Human).